The primary structure comprises 63 residues: Large ribosomal subunit protein uL29 (63 aa).

The protein belongs to the universal ribosomal protein uL29 family.

In Shewanella baltica (strain OS223), this protein is Large ribosomal subunit protein uL29.